The following is a 248-amino-acid chain: PF03932 family protein CutC (248 aa).

The protein belongs to the CutC family. In terms of assembly, homodimer.

The protein resides in the cytoplasm. The chain is PF03932 family protein CutC from Salmonella enteritidis PT4 (strain P125109).